A 134-amino-acid chain; its full sequence is Translation initiation factor 2 subunit beta (134 aa).

This sequence belongs to the eIF-2-beta/eIF-5 family. Heterotrimer composed of an alpha, a beta and a gamma chain.

In terms of biological role, eIF-2 functions in the early steps of protein synthesis by forming a ternary complex with GTP and initiator tRNA. This chain is Translation initiation factor 2 subunit beta, found in Pyrobaculum neutrophilum (strain DSM 2338 / JCM 9278 / NBRC 100436 / V24Sta) (Thermoproteus neutrophilus).